Here is an 85-residue protein sequence, read N- to C-terminus: MKLFLLLVFFASMLIDGLVNADGYIRGSNGCKISCLWGNEGCNKECKGFGAYYGYCWTWGLACWCEGLPDDKTWKSESNTCGGKK.

A signal peptide spans 1-21 (MKLFLLLVFFASMLIDGLVNA). The region spanning 22–82 (DGYIRGSNGC…TWKSESNTCG (61 aa)) is the LCN-type CS-alpha/beta domain. 4 cysteine pairs are disulfide-bonded: cysteine 31-cysteine 81, cysteine 35-cysteine 56, cysteine 42-cysteine 63, and cysteine 46-cysteine 65. Glycine amide is present on glycine 82.

Belongs to the long (4 C-C) scorpion toxin superfamily. Sodium channel inhibitor family. Expressed by the venom gland.

It localises to the secreted. Functionally, causes a slow progressive depressant flaccid paralysis, when injected into S.falculata blowfly larvae. Inhibits dose-dependently the total sodium (Nav) currents both in dorsal root ganglia neurons and in ventricular myocytes. Is toxic to mice by intravenous injection, but not by subcutaneous or intracerebroventricular injection. Produces antiarrhythmia in rat. Is then active on both mammals and insects. The polypeptide is Depressant scorpion toxin BmKIM (KIM2) (Olivierus martensii (Manchurian scorpion)).